Here is a 539-residue protein sequence, read N- to C-terminus: uncharacterized protein (539 aa).

ABC transporter domains lie at 9–276 (LEVK…EFKK) and 288–536 (IKLE…QEMF). Residues 41–48 (GKSGAGKS) and 325–332 (GTSGAGKT) each bind ATP.

This sequence belongs to the ABC transporter superfamily.

This is an uncharacterized protein from Methanocaldococcus jannaschii (strain ATCC 43067 / DSM 2661 / JAL-1 / JCM 10045 / NBRC 100440) (Methanococcus jannaschii).